The following is a 417-amino-acid chain: Transmembrane protease serine 11G (417 aa).

Over 1–21 (MYQPGILVRRKRVWKPWTVAL) the chain is Cytoplasmic. A helical; Signal-anchor for type II membrane protein membrane pass occupies residues 22–42 (ITVALLLALAVLIGLLVYFLV). Topologically, residues 43 to 417 (YDEKTHYYQA…RDWIKSKTSI (375 aa)) are extracellular. In terms of domain architecture, SEA spans 46-165 (KTHYYQASFW…PYLREMNAAQ (120 aa)). N-linked (GlcNAc...) asparagine glycosylation occurs at asparagine 60. In terms of domain architecture, Peptidase S1 spans 186–416 (IADGKPADKA…YRDWIKSKTS (231 aa)). Residues cysteine 211 and cysteine 227 are joined by a disulfide bond. Catalysis depends on charge relay system residues histidine 226 and aspartate 271. Disulfide bonds link cysteine 336/cysteine 352 and cysteine 363/cysteine 392. The active-site Charge relay system is the serine 367.

The protein belongs to the peptidase S1 family.

The protein localises to the membrane. The sequence is that of Transmembrane protease serine 11G (Tmprss11g) from Mus musculus (Mouse).